The chain runs to 614 residues: Fem-3 mRNA-binding factor 1 (614 aa).

Polar residues predominate over residues 1-24 (MDQSKMRYTNQFRKTPQKPTSTEV). The disordered stretch occupies residues 1–34 (MDQSKMRYTNQFRKTPQKPTSTEVGNHHTPAHSP). One can recognise a PUM-HD domain in the interval 160–564 (TRSNNVLPTW…KMIETLAHLR (405 aa)). 8 Pumilio repeats span residues 185 to 223 (EVLDSGDLMKFAVDKTGCQFLEKAVKGSLTSYQKFQLFE), 224 to 263 (QVIGRKDDFLKLSTNIFGNYFVQEIIGMSLTTYDDDNIKR), 269 to 305 (NFISSQMTDMCLDKFACRVIQSSLQNMDLSLACKLVQ), 306 to 342 (ALPRDARLIAICVDQNANHVIQKVVAVIPLKNWEFIV), 343 to 382 (DFVATPEHLRQICFDKYGCRVVQTIIEKLTADSINVDLTS), 398 to 434 (SVTNRCQELATNEYANYIIQHIVSNDDLAVYRECIIE), 436 to 471 (CLMRNLLSLSQEKFASHVVEKAFLHAPMELLAEMMD), and 483 to 519 (TGKDALDIMMFHQFGNYVVQCMLTICCDAVSGRRQTK). Residues 283–614 (FACRVIQSSL…NLRLMRTFSP (332 aa)) form a binding to gld-3 isoform A region.

In terms of assembly, interacts (via C-terminus) with gld-3 isoform A in an RNA-independent manner. As to expression, expressed specifically in the germline (at protein level).

The protein localises to the cytoplasm. Its function is as follows. RNA-binding protein that binds to the consensus sequence 5'-UGUGCCAUA-3' in mRNA 3'-UTRs. Involved in the control of stem cells and sex determination in the C.elegans hermaphrodite germline. May also play a role in the hermaphrodite germline proliferation and oogenesis. Binds specifically to the regulatory region of fem-3 3'-UTR and mediates the sperm/oocyte switch. Negatively regulates gld-3 expression, possibly by directly binding to two sites within the 3'-UTR of gld-3 isoform b. In association with the cye-1/cdk-2 complex, negatively regulates gld-1 expression in the distal germline cells of the mitotic zone. By binding to the 3'-UTR, represses phosphatase lip-1 expression in the distal part of the germline mitotic zone. Suppresses germline tumor formation by preventing the dedifferentiation of secondary spermatocytes. This Caenorhabditis elegans protein is Fem-3 mRNA-binding factor 1 (fbf-1).